Consider the following 739-residue polypeptide: MSSRHRLDLDGSGRGDRRRSPNRRSRSRSRSPHRRSSPDRKRQIGAVGNMKIQINPYNNQPFSNRYWAIWEKRSQLPVWEYKEKFMELLRNNQCITLVGETGSGKTTQIPQWAVEFMKQQQQGQPPGQARLVACTQPRRVAAMSVATRVAEEMDVVLGQEVGYSIRFEDCISERTVLKYCTDGMLLREAMNSPLLDKYKVLILDEAHERTLATDILMGLIKEIVRNRADIKVVIMSATLDAGKFQRYFEDCPLLSVPGRTFPVEIFFTPNAEKDYLEAAIRTVIQIHMVEEVEGDILLFLTGQEEIEEACKRIDREIQALGADAGALSCIPLYSTLPPAAQQRIFEPAPPNRPNGAISRKCVISTNIAETSLTIDGVVFVIDPGFSKQKVYNPRIRVESLLVCPISKASAMQRAGRAGRTKPGKCFRLYTETAYGSEMQDQTYPEILRSNLGSVVLQLKKLGTEDLVHFDFMDPPAPETLMRALELLNYLQAINDDGELTELGSLMAEFPLDPQLAKMLITSTELNCSNEILSITAMLSVPQCWVRPNEMRTEADEAKARFAHIDGDHLTLLNVYHSFKQNQEDPQWCYDNFINYRTMKTADTVRTQLSRVMDKYNLRRVSTDFKSRDYYLNIRKALVAGFFMQVAHLERSGHYVTVKDNQLVNLHPSTVLDHKPEWALYNEFVLTTKNFIRTVTDVRPEWLLQIAPQYYDLDNFPDGDTKRKLTTVMQTLQRNAGRGY.

Residues 1 to 19 (MSSRHRLDLDGSGRGDRRR) are compositionally biased toward basic and acidic residues. The interval 1–49 (MSSRHRLDLDGSGRGDRRRSPNRRSRSRSRSPHRRSSPDRKRQIGAVGN) is disordered. A compositionally biased stretch (basic residues) spans 20–35 (SPNRRSRSRSRSPHRR). One can recognise a Helicase ATP-binding domain in the interval 86–257 (MELLRNNQCI…FEDCPLLSVP (172 aa)). Residue 99–106 (GETGSGKT) coordinates ATP. Residues 204–207 (DEAH) carry the DEAH box motif. Positions 282-462 (TVIQIHMVEE…SVVLQLKKLG (181 aa)) constitute a Helicase C-terminal domain.

The protein belongs to the DEAD box helicase family. DEAH subfamily. DDX15/PRP43 sub-subfamily.

The protein localises to the nucleus. The catalysed reaction is ATP + H2O = ADP + phosphate + H(+). Its function is as follows. Pre-mRNA processing factor involved in disassembly of spliceosomes after the release of mature mRNA. The chain is Pre-mRNA-splicing factor ATP-dependent RNA helicase ddx-15 from Caenorhabditis elegans.